The chain runs to 951 residues: MGVPAFFRWLSRKYPSIIVNCVEEKPKECNGVKIPVDASKPNPNDVEFDNLYLDMNGIIHPCTHPEDKPAPKNEDEMMVAIFEYIDRLFNIVRPRRLLYMAIDGVAPRAKMNQQRSRRFRASKEGMEAAVEKQRVREEILAKGGFLPPEEIKERFDSNCITPGTEFMDNLAKCLRYYIADRLNNDPGWKNLTVILSDASAPGEGEHKIMDYIRRQRAQPNHDPNTHHCLCGADADLIMLGLATHEPNFTIIREEFKPNKPKPCALCNQFGHEVKDCEGLPREKKGKHDELADSLPCAEGEFIFLRLNVLREYLERELTMASLPFPFDVERSIDDWVFMCFFVGNDFLPHLPSLEIREGAIDRLVNIYKNVVHKTGGYLTESGYVNLQRVQMIMLAVGEVEDSIFKKRKDDEDSFRRRQKEKRKRMKRDQPAFTPSGILTPHALGSRNSPGCQVASNPRQAAYEMRMQRNSSPSISPNTSFASDGSPSPLGGIKRKAEDSDSEPEPEDNVRLWEAGWKQRYYKNKFDVDAADEKFRRKVVQSYVEGLCWVLRYYYQGCASWKWYYPFHYAPFASDFEGIADMSSEFEKGTKPFKPLEQLMGVFPAASGNFLPPTWRKLMSDPDSSIIDFYPEDFAIDLNGKKYAWQGVALLPFVDERRLRAALEEVYPDLTPEENRRNSLGGDVLFVGKLHPLRDFILELYQTGSTEPVDVPPELCHGIQGTFSLDEEAILPDQTVCSPVPMLRDLTQNTAVSINFKDPQFAEDYVFKAAMLPGARKPATVLKPGDWEKSSNGRQWKPQLGFNRDRRPVHLDQAAFRTLGHVTPRGSGTSVYTNTALPPANYQGNNYRPLLRGQAQIPKLMSNMRPQDSWRGPPPLFQQHRFERSVGAEPLLPWNRMIQNQNAAFQPNQYQMLGGPGGYPPRRDDHRGGRQGYPREGRKYPLPPPSGRYSWN.

The segment at 262 to 278 (PCALCNQFGHEVKDCEG) adopts a CCHC-type zinc-finger fold. Lysine 286 is subject to N6-acetyllysine. The interval 408–508 (KDDEDSFRRR…SDSEPEPEDN (101 aa)) is disordered. The segment covering 416–426 (RRQKEKRKRMK) has biased composition (basic residues). At threonine 439 the chain carries Phosphothreonine. Composition is skewed to polar residues over residues 445–458 (SRNS…SNPR) and 467–485 (QRNS…SDGS). Phosphoserine is present on residues serine 448, serine 471, serine 473, serine 475, serine 482, serine 487, serine 499, serine 501, and serine 678. Residues arginine 824, arginine 847, and arginine 851 each carry the asymmetric dimethylarginine; alternate modification. 3 positions are modified to omega-N-methylarginine; alternate: arginine 824, arginine 847, and arginine 851. Arginine 880 carries the post-translational modification Asymmetric dimethylarginine. Position 883 is an asymmetric dimethylarginine; alternate (arginine 883). Position 883 is an omega-N-methylarginine; alternate (arginine 883). Arginine 895 carries the omega-N-methylarginine modification. A disordered region spans residues 907–951 (NQYQMLGGPGGYPPRRDDHRGGRQGYPREGRKYPLPPPSGRYSWN). Residues 920–938 (PRRDDHRGGRQGYPREGRK) show a composition bias toward basic and acidic residues. Arginine 947 bears the Asymmetric dimethylarginine; alternate mark. The residue at position 947 (arginine 947) is an Omega-N-methylarginine; alternate.

The protein belongs to the 5'-3' exonuclease family. XRN2/RAT1 subfamily. Interacts with POLR2A and SMN1/SMN2. Interacts with CDKN2AIP and NKRF. Interacts with CDKN2AIPNL; the interaction is direct. Interacts with TRIM71 (via NHL repeats) in an RNA-dependent manner. Interacts with DHX34; the interaction is RNA-independent. In terms of tissue distribution, expressed in the spleen, testis, heart, brain, lung, liver, skeletal muscle, and kidney.

It is found in the nucleus. Its subcellular location is the nucleolus. In terms of biological role, possesses 5'-&gt;3' exoribonuclease activity. May promote the termination of transcription by RNA polymerase II. During transcription termination, cleavage at the polyadenylation site liberates a 5' fragment which is subsequently processed to form the mature mRNA and a 3' fragment which remains attached to the elongating polymerase. The processive degradation of this 3' fragment by this protein may promote termination of transcription. Binds to RNA polymerase II (RNAp II) transcription termination R-loops formed by G-rich pause sites. This chain is 5'-3' exoribonuclease 2 (Xrn2), found in Mus musculus (Mouse).